We begin with the raw amino-acid sequence, 323 residues long: tRNA dimethylallyltransferase (323 aa).

12–19 (GPTAAGKT) is an ATP binding site. Residue 14–19 (TAAGKT) participates in substrate binding. 2 interaction with substrate tRNA regions span residues 37 to 40 (DSAL) and 161 to 165 (QRLIR).

It belongs to the IPP transferase family. Monomer. Mg(2+) is required as a cofactor.

The enzyme catalyses adenosine(37) in tRNA + dimethylallyl diphosphate = N(6)-dimethylallyladenosine(37) in tRNA + diphosphate. Catalyzes the transfer of a dimethylallyl group onto the adenine at position 37 in tRNAs that read codons beginning with uridine, leading to the formation of N6-(dimethylallyl)adenosine (i(6)A). The sequence is that of tRNA dimethylallyltransferase from Pseudomonas syringae pv. syringae (strain B728a).